The following is a 308-amino-acid chain: uncharacterized protein (308 aa).

Transmembrane regions (helical) follow at residues V6 to L26, A31 to I51, F63 to L83, I100 to F120, A128 to I148, M162 to F182, L195 to S215, F221 to A241, V257 to Y277, and S287 to L307.

The protein belongs to the auxin efflux carrier (TC 2.A.69) family.

The protein localises to the cell membrane. This is an uncharacterized protein from Methanocaldococcus jannaschii (strain ATCC 43067 / DSM 2661 / JAL-1 / JCM 10045 / NBRC 100440) (Methanococcus jannaschii).